A 445-amino-acid polypeptide reads, in one-letter code: Homogentisate 1,2-dioxygenase (445 aa).

An N6-acetyllysine modification is found at K98. 3 residues coordinate Fe cation: H335, E341, and H371. Position 414 is an N6-succinyllysine (K414).

It belongs to the homogentisate dioxygenase family. Homohexamer arranged as a dimer of trimers. The cofactor is Fe cation. In terms of tissue distribution, highest expression in the prostate, small intestine, colon, kidney and liver.

It carries out the reaction homogentisate + O2 = 4-maleylacetoacetate + H(+). It participates in amino-acid degradation; L-phenylalanine degradation; acetoacetate and fumarate from L-phenylalanine: step 4/6. Catalyzes the conversion of homogentisate to maleylacetoacetate. This is Homogentisate 1,2-dioxygenase (HGD) from Homo sapiens (Human).